A 403-amino-acid chain; its full sequence is Glucose/galactose-binding lipoprotein (403 aa).

An N-terminal signal peptide occupies residues 1 to 25 (MKENSCTACSRRLALFVGAAVLVVG). C26 is lipidated: N-palmitoyl cysteine. A lipid anchor (S-diacylglycerol cysteine) is attached at C26.

Belongs to the bacterial solute-binding protein 2 family.

It localises to the cell membrane. Functionally, may be involved in the transport of sugars. May have a role in chemotaxis. The chain is Glucose/galactose-binding lipoprotein (mglB) from Treponema pallidum (strain Nichols).